The chain runs to 993 residues: DNA-binding protein SMUBP-2 (993 aa).

Residue Ala2 is modified to N-acetylalanine. ATP is bound by residues 213–220, Gln402, Tyr441, and Glu570; that span reads GPPGTGKT. An SS DNA-binding region spans residues 637–783; that stretch reads TAFEYLDDIV…KARHITVSRR (147 aa). Disordered regions lie at residues 650-723, 765-815, and 837-872; these read YTHE…GPDR, LRHD…EPVT, and RQQSSQAQTAKGQPGGDSRPQKASQKKKKKEPKGPV. Polar residues-rich tracts occupy residues 667–683 and 703–716; these read PSTSIRKPASDQESGQE and HVQSQHSSSANGSD. The 64-residue stretch at 721 to 784 folds into the R3H domain; sequence PDRTEHFRAT…ARHITVSRRS (64 aa). Residues 765 to 775 are compositionally biased toward basic and acidic residues; it reads LRHDSTGEGKA. A compositionally biased stretch (low complexity) spans 784–794; it reads SPASSGSVAPQ. 2 positions are modified to phosphoserine: Ser797 and Ser800. A compositionally biased stretch (polar residues) spans 837-847; it reads RQQSSQAQTAK. Positions 862-866 match the Nuclear localization signal motif; it reads KKKKK. The segment at 889-938 adopts an AN1-type; degenerate zinc-finger fold; the sequence is VKADNTCSFSKCSVSTTTLGQFCMHCSHRYYLSHHLPEIHGCGEKARAHA. Cys911, Cys914, His928, and Cys930 together coordinate Zn(2+). The segment at 953–993 is disordered; it reads GTKDRALDPAKRAQLQRRLDKKLGELSSQRTSRKKEKERGT. The segment covering 954–976 has biased composition (basic and acidic residues); that stretch reads TKDRALDPAKRAQLQRRLDKKLG.

The protein belongs to the DNA2/NAM7 helicase family. In terms of assembly, homooligomer. Interacts with RUVBL1. Interacts with RUVBL2. Interacts with GTF3C1. Interacts with ABT1. Interacts with ribosomes. In terms of tissue distribution, in all tissues examined.

Its subcellular location is the nucleus. The protein resides in the cytoplasm. The protein localises to the cell projection. It localises to the axon. The catalysed reaction is ATP + H2O = ADP + phosphate + H(+). Functionally, 5' to 3' helicase that unwinds RNA and DNA duplexes in an ATP-dependent reaction. Specific to 5'-phosphorylated single-stranded guanine-rich sequences. May play a role in RNA metabolism, ribosome biogenesis or initiation of translation. May play a role in regulation of transcription. Interacts with tRNA-Tyr. The sequence is that of DNA-binding protein SMUBP-2 (Ighmbp2) from Mus musculus (Mouse).